Here is a 138-residue protein sequence, read N- to C-terminus: MRTLWIMAVLLVVVEGSLVQLGKMIFQETGKNPATSYGLYGCNCGPGGRRKPKDATDRCCFLHKCCYKKLTDCDPIKDSYSYSWVNKAIVCGGDDPHLKEMCECDKAMAICFRENLDTYDKKKKINLKLFCKKTSEQC.

Residues 1–16 form the signal peptide; that stretch reads MRTLWIMAVLLVVVEG. Intrachain disulfides connect Cys42–Cys131, Cys44–Cys60, Cys59–Cys111, Cys65–Cys138, Cys66–Cys104, and Cys91–Cys102. The interval 121 to 133 is important for membrane-damaging activities in eukaryotes and bacteria; heparin-binding; sequence KKKKINLKLFCKK.

It belongs to the phospholipase A2 family. Group II subfamily. K49 sub-subfamily. As to expression, expressed by the venom gland.

The protein localises to the secreted. Its function is as follows. Snake venom phospholipase A2 homolog that lacks catalytic activity. It shows myotoxic and weak anticoagulant activities. A model of myotoxic mechanism has been proposed: an apo Lys49-PLA2 is activated by the entrance of a hydrophobic molecule (e.g. fatty acid) at the hydrophobic channel of the protein leading to a reorientation of a monomer. This reorientation causes a transition between 'inactive' to 'active' states, causing alignment of C-terminal and membrane-docking sites (MDoS) side-by-side and putting the membrane-disruption sites (MDiS) in the same plane, exposed to solvent and in a symmetric position for both monomers. The MDoS region stabilizes the toxin on membrane by the interaction of charged residues with phospholipid head groups. Subsequently, the MDiS region destabilizes the membrane with penetration of hydrophobic residues. This insertion causes a disorganization of the membrane, allowing an uncontrolled influx of ions (i.e. calcium and sodium), and eventually triggering irreversible intracellular alterations and cell death. The sequence is that of Basic phospholipase A2 homolog CTs-K49a from Trimeresurus stejnegeri (Chinese green tree viper).